The sequence spans 572 residues: Asparagine--tRNA ligase, cytoplasmic 1 (572 aa).

Ala-2 carries the N-acetylalanine modification. The segment at residues 53–131 (VRIGGWVKSG…QQIELNVVKV (79 aa)) is a DNA-binding region (OB). Residues 236-292 (DVEAARLIVIERGNVVAELKAAKASKEAITAAVAELKIAKETFAHIDERSRLRPGLP) form the WHEP-TRS domain.

This sequence belongs to the class-II aminoacyl-tRNA synthetase family.

The protein localises to the cytoplasm. Its subcellular location is the cytosol. The enzyme catalyses tRNA(Asn) + L-asparagine + ATP = L-asparaginyl-tRNA(Asn) + AMP + diphosphate + H(+). This chain is Asparagine--tRNA ligase, cytoplasmic 1, found in Arabidopsis thaliana (Mouse-ear cress).